Reading from the N-terminus, the 648-residue chain is Shugoshin (648 aa).

Coiled-coil stretches lie at residues 95–122 (LMIKITDLETKISELVQENVQLRSRLSV) and 208–273 (DDRA…KDEA). Disordered regions lie at residues 188–239 (KVVG…RSSR), 262–334 (EADK…QEDA), 367–443 (VYRD…RPRR), 483–518 (TNRKLRKQREGVADSADVHGETDHEQDPEQSPAAED), and 628–648 (HRARAKAERQVGKKPAFKVST). Composition is skewed to basic and acidic residues over residues 200-217 (VRGERETLDDRAQQHQEA) and 262-273 (EADKSRSAKDEA). A compositionally biased stretch (polar residues) spans 306-315 (ASGTLTQSNE). Composition is skewed to basic and acidic residues over residues 424–440 (IVVDEVMPHNDYSDATR) and 490–509 (QREGVADSADVHGETDHEQD).

This sequence belongs to the shugoshin family.

The protein resides in the nucleus. Its subcellular location is the chromosome. It localises to the centromere. Its function is as follows. Plays a central role in chromosome cohesion during cell division by preventing premature dissociation of cohesin complex from centromeres after prophase, when most of cohesin complex dissociates from chromosomes arms. May act by protecting RAD21 and or REC8 from cleavage by ESP1/separase. This Eremothecium gossypii (strain ATCC 10895 / CBS 109.51 / FGSC 9923 / NRRL Y-1056) (Yeast) protein is Shugoshin (SGO1).